Here is a 215-residue protein sequence, read N- to C-terminus: Nascent polypeptide-associated complex subunit alpha (215 aa).

The tract at residues 1–81 is disordered; the sequence is MPGEATETVP…SEKKARKAMS (81 aa). The span at 9–28 shows a compositional bias: polar residues; it reads VPATEQELPQPQAETGSGTE. Positions 29–42 are enriched in acidic residues; sequence SDSDESVPELEEQD. Ser43 is modified (phosphoserine; by ILK1). Positions 44-57 are enriched in low complexity; that stretch reads TQATTQQAQLAAAA. Residues 69-80 are required for DNA-binding; that stretch reads QSRSEKKARKAM. One can recognise an NAC-A/B domain in the interval 70-135; sequence SRSEKKARKA…AKIEDLSQQA (66 aa). The interval 93–108 is RNA/DNA-binding; that stretch reads RVTIRKSKNILFVITK. Residue Ser132 is modified to Phosphoserine. Lys142 carries the N6-acetyllysine; alternate modification. A Glycyl lysine isopeptide (Lys-Gly) (interchain with G-Cter in SUMO2); alternate cross-link involves residue Lys142. Residue Thr159 is modified to Phosphothreonine; by GSK3-beta. Thr161 is modified (phosphothreonine). Phosphoserine is present on residues Ser166, Ser186, Ser191, and Ser203. One can recognise a UBA domain in the interval 176 to 213; the sequence is VEVKDIELVMSQANVSRAKAVRALKNNSNDIVNAIMEL.

Belongs to the NAC-alpha family. In terms of assembly, interacts with TBP and JUN. Part of the nascent polypeptide-associated complex (NAC), which is a heterodimer of NACA and BTF3 (via NAC-A/B domains). NAC associates with ribosomes through the BTF3/NACB subunit and contacts the ribosomal protein L23, which is positioned near the exiting site. Both subunits can contact nascent polypeptide chains. NACA may also form homodimers, and only this form binds DNA. In terms of processing, phosphorylation of Thr-159 by GSK3B may promote proteasome mediated degradation. Phosphorylation of Ser-43 by ILK during cell adhesion may promote nuclear localization. In terms of tissue distribution, ubiquitously expressed.

The protein resides in the cytoplasm. The protein localises to the nucleus. Its function is as follows. Prevents inappropriate targeting of non-secretory polypeptides to the endoplasmic reticulum (ER). Binds to nascent polypeptide chains as they emerge from the ribosome and blocks their interaction with the signal recognition particle (SRP), which normally targets nascent secretory peptides to the ER. Also reduces the inherent affinity of ribosomes for protein translocation sites in the ER membrane (M sites). May act as a specific coactivator for JUN, binding to DNA and stabilizing the interaction of JUN homodimers with target gene promoters. In Homo sapiens (Human), this protein is Nascent polypeptide-associated complex subunit alpha (NACA).